The chain runs to 208 residues: Small ribosomal subunit protein eS8 (208 aa).

The segment at 1–27 is disordered; the sequence is MGISRDNWHKRRKTGGKRKPYHKKRKY. The N-myristoyl glycine moiety is linked to residue Gly2. Over residues 8 to 26 the composition is skewed to basic residues; that stretch reads WHKRRKTGGKRKPYHKKRK. 2 positions are modified to N6-acetyllysine: Lys37 and Lys128. A Phosphothreonine modification is found at Thr130. Phosphoserine is present on Ser160. Glycyl lysine isopeptide (Lys-Gly) (interchain with G-Cter in SUMO2) cross-links involve residues Lys170 and Lys193.

This sequence belongs to the eukaryotic ribosomal protein eS8 family. Component of the small ribosomal subunit. Identified in a IGF2BP1-dependent mRNP granule complex containing untranslated mRNAs. Part of the small subunit (SSU) processome, composed of more than 70 proteins and the RNA chaperone small nucleolar RNA (snoRNA) U3.

The protein resides in the cytoplasm. It localises to the membrane. The protein localises to the nucleus. It is found in the nucleolus. Functionally, component of the small ribosomal subunit. The ribosome is a large ribonucleoprotein complex responsible for the synthesis of proteins in the cell. Part of the small subunit (SSU) processome, first precursor of the small eukaryotic ribosomal subunit. During the assembly of the SSU processome in the nucleolus, many ribosome biogenesis factors, an RNA chaperone and ribosomal proteins associate with the nascent pre-rRNA and work in concert to generate RNA folding, modifications, rearrangements and cleavage as well as targeted degradation of pre-ribosomal RNA by the RNA exosome. This chain is Small ribosomal subunit protein eS8 (Rps8), found in Mus musculus (Mouse).